The sequence spans 269 residues: MPELPEIETIKRGLTSLIINQKVNKAILHRENLRWVIPKHLSTTLTNQLISTIDRRGKYLLIKFKVGTLIIHLGMSGSIKVVNTNTPLLKHEHFELQLKNGTSMRLKDPRRFGAVLFSKDGSHKLLDSLGVEPLKTSFYDGYLYQKSRNKQQNIKAFIMDNKIVVGVGNIYACESLFMAGINPKLKAGSISKTRYNVLTQCIKNILTQAIEAGGTTLQDFVQVNGNPGYFTQNLSVYGCKNKKCYRCKGIIIKFVQNQRSTFYCKKCQT.

Catalysis depends on P2, which acts as the Schiff-base intermediate with DNA. The active-site Proton donor is E3. K58 serves as the catalytic Proton donor; for beta-elimination activity. The DNA site is built by H91, R110, and K150. The segment at 235–269 (SVYGCKNKKCYRCKGIIIKFVQNQRSTFYCKKCQT) adopts an FPG-type zinc-finger fold. The active-site Proton donor; for delta-elimination activity is the R259.

The protein belongs to the FPG family. In terms of assembly, monomer. The cofactor is Zn(2+).

It carries out the reaction Hydrolysis of DNA containing ring-opened 7-methylguanine residues, releasing 2,6-diamino-4-hydroxy-5-(N-methyl)formamidopyrimidine.. It catalyses the reaction 2'-deoxyribonucleotide-(2'-deoxyribose 5'-phosphate)-2'-deoxyribonucleotide-DNA = a 3'-end 2'-deoxyribonucleotide-(2,3-dehydro-2,3-deoxyribose 5'-phosphate)-DNA + a 5'-end 5'-phospho-2'-deoxyribonucleoside-DNA + H(+). Functionally, involved in base excision repair of DNA damaged by oxidation or by mutagenic agents. Acts as a DNA glycosylase that recognizes and removes damaged bases. Has a preference for oxidized purines, such as 7,8-dihydro-8-oxoguanine (8-oxoG). Has AP (apurinic/apyrimidinic) lyase activity and introduces nicks in the DNA strand. Cleaves the DNA backbone by beta-delta elimination to generate a single-strand break at the site of the removed base with both 3'- and 5'-phosphates. This is Formamidopyrimidine-DNA glycosylase from Vesicomyosocius okutanii subsp. Calyptogena okutanii (strain HA).